The chain runs to 891 residues: Alanine--tRNA ligase (891 aa).

Residues H564, H568, C678, and H682 each coordinate Zn(2+).

The protein belongs to the class-II aminoacyl-tRNA synthetase family. Zn(2+) is required as a cofactor.

Its subcellular location is the cytoplasm. It carries out the reaction tRNA(Ala) + L-alanine + ATP = L-alanyl-tRNA(Ala) + AMP + diphosphate. Its function is as follows. Catalyzes the attachment of alanine to tRNA(Ala) in a two-step reaction: alanine is first activated by ATP to form Ala-AMP and then transferred to the acceptor end of tRNA(Ala). Also edits incorrectly charged Ser-tRNA(Ala) and Gly-tRNA(Ala) via its editing domain. This chain is Alanine--tRNA ligase, found in Nitrobacter winogradskyi (strain ATCC 25391 / DSM 10237 / CIP 104748 / NCIMB 11846 / Nb-255).